The chain runs to 199 residues: Putative peroxiredoxin ycf42 (199 aa).

One can recognise a Thioredoxin domain in the interval 8–165 (LRVGQLAPDF…TLRVLQAIQY (158 aa)). The active-site Cysteine sulfenic acid (-SOH) intermediate is Cys53.

The protein belongs to the peroxiredoxin family. AhpC/Prx1 subfamily. In terms of assembly, homodimer; disulfide-linked, upon oxidation. In terms of processing, the Cys-53-SH group is the primary site of oxidation by H(2)O(2), and the oxidized Cys-53 (probably Cys-SOH) rapidly reacts with Cys-174-SH of the other subunit to form an intermolecular disulfide. This disulfide is subsequently reduced by thioredoxin.

The protein resides in the plastid. The protein localises to the chloroplast. It carries out the reaction a hydroperoxide + [thioredoxin]-dithiol = an alcohol + [thioredoxin]-disulfide + H2O. Functionally, thiol-specific peroxidase that catalyzes the reduction of hydrogen peroxide and organic hydroperoxides to water and alcohols, respectively. Plays a role in cell protection against oxidative stress by detoxifying peroxides. The sequence is that of Putative peroxiredoxin ycf42 (ycf42) from Pyropia yezoensis (Susabi-nori).